The chain runs to 232 residues: 5'-methylthioadenosine/S-adenosylhomocysteine nucleosidase (232 aa).

The active-site Proton acceptor is the Glu12. Residues Gly78, Ile152, and 173–174 (ME) each bind substrate. Asp197 functions as the Proton donor in the catalytic mechanism.

It belongs to the PNP/UDP phosphorylase family. MtnN subfamily. Homodimer.

The enzyme catalyses S-adenosyl-L-homocysteine + H2O = S-(5-deoxy-D-ribos-5-yl)-L-homocysteine + adenine. It catalyses the reaction S-methyl-5'-thioadenosine + H2O = 5-(methylsulfanyl)-D-ribose + adenine. It carries out the reaction 5'-deoxyadenosine + H2O = 5-deoxy-D-ribose + adenine. It participates in amino-acid biosynthesis; L-methionine biosynthesis via salvage pathway; S-methyl-5-thio-alpha-D-ribose 1-phosphate from S-methyl-5'-thioadenosine (hydrolase route): step 1/2. Catalyzes the irreversible cleavage of the glycosidic bond in both 5'-methylthioadenosine (MTA) and S-adenosylhomocysteine (SAH/AdoHcy) to adenine and the corresponding thioribose, 5'-methylthioribose and S-ribosylhomocysteine, respectively. Also cleaves 5'-deoxyadenosine, a toxic by-product of radical S-adenosylmethionine (SAM) enzymes, into 5-deoxyribose and adenine. Thus, is required for in vivo function of the radical SAM enzymes biotin synthase and lipoic acid synthase, that are inhibited by 5'-deoxyadenosine accumulation. The protein is 5'-methylthioadenosine/S-adenosylhomocysteine nucleosidase of Salmonella choleraesuis (strain SC-B67).